We begin with the raw amino-acid sequence, 77 residues long: MAKFATQLLLFVLIASLVMLEVHASNTFQVPDLGKRLLMNRDPNGFPCAESCVYIPCTVTALLGCSCRNRVCYRNEL.

The N-terminal stretch at Met-1–Ala-24 is a signal peptide. The propeptide at Ser-25 to Asn-44 is removed in mature form. The cyclopeptide (Gly-Asn) cross-link spans Gly-45–Asn-75. Cystine bridges form between Cys-48–Cys-65, Cys-52–Cys-67, and Cys-57–Cys-72. Residues Glu-76–Leu-77 constitute a propeptide, removed in mature form.

This is a cyclic peptide. In terms of tissue distribution, expressed in fruit and pedicel but not in root, leaf and stem (at protein level).

In terms of biological role, probably participates in a plant defense mechanism. This chain is Chassatide C13, found in Chassalia chartacea (Chassalia curviflora).